The primary structure comprises 274 residues: Undecaprenyl-diphosphatase (274 aa).

8 helical membrane-spanning segments follow: residues 9–29 (LEYL…FIPV), 47–67 (PGAS…AWYF), 95–115 (ILIG…FVPY), 120–140 (VLRS…FMYL), 161–181 (LIGF…GITI), 197–217 (FSFL…FISS), 224–244 (LGFF…LLAI), and 254–274 (NGLK…LLNL).

Belongs to the UppP family.

It is found in the cell inner membrane. It carries out the reaction di-trans,octa-cis-undecaprenyl diphosphate + H2O = di-trans,octa-cis-undecaprenyl phosphate + phosphate + H(+). Functionally, catalyzes the dephosphorylation of undecaprenyl diphosphate (UPP). Confers resistance to bacitracin. The protein is Undecaprenyl-diphosphatase of Prochlorococcus marinus (strain AS9601).